Consider the following 654-residue polypeptide: RING finger protein 112 (654 aa).

The RING-type zinc-finger motif lies at 80–121 (CSICLERLREPISLDCGHDFCIRCFSTHRIPGCELPCCPECR). Residues 154 to 654 (AVRAERLLLV…GDREPLLQEE (501 aa)) are interaction with ZBTB16. The GB1/RHD3-type G domain occupies 189 to 420 (DTPVCLLAVL…YILDVLSTAP (232 aa)). 340–341 (RD) provides a ligand contact to GTP. The next 2 helical transmembrane spans lie at 570-590 (LAAV…GVVG) and 603-623 (GMVA…GGGV).

It belongs to the TRAFAC class dynamin-like GTPase superfamily. GB1/RHD3 GTPase family. GB1 subfamily. As to quaternary structure, self-associates. Interacts with SP1 in an oxidative stress-regulated manner. Interacts with SIGMAR1 in an oxidative stress-regulated manner. Interacts with ZBTB16 (via C2H2-type zinc finger domains 1 and 2). Post-translationally, auto-ubiquitinated. In terms of tissue distribution, expressed in most of the brain areas, including cortex, striatum, hippocampus, thalamus, and cerebellum (at protein level). Expressed in lateral amygdaloid nucleus, and ventromedial hypothalamus. Also expressed strongly in the marginal zone of brain vesicles, optic stalk, and cartilage primordium.

The protein resides in the membrane. It is found in the cytoplasm. Its subcellular location is the nucleus. The protein localises to the nuclear body. It localises to the nucleoplasm. The protein resides in the endosome. It is found in the cytoplasmic vesicle. Its subcellular location is the secretory vesicle. The protein localises to the synaptic vesicle. It localises to the postsynaptic density. The protein resides in the perikaryon. It is found in the cell projection. Its subcellular location is the neuron projection. It carries out the reaction S-ubiquitinyl-[E2 ubiquitin-conjugating enzyme]-L-cysteine + [acceptor protein]-L-lysine = [E2 ubiquitin-conjugating enzyme]-L-cysteine + N(6)-ubiquitinyl-[acceptor protein]-L-lysine.. It functions in the pathway protein modification; protein ubiquitination. Functionally, E3 ubiquitin-protein ligase that plays an important role in neuronal differentiation, including neurogenesis and gliogenesis, during brain development. During embryonic development initiates neuronal differentiation by inducing cell cycle arrest at the G0/G1 phase through up-regulation of cell-cycle regulatory proteins. Plays a role not only in the fetal period during the development of the nervous system, but also in the adult brain, where it is involved in the maintenance of neural functions and protection of the nervous tissue cells from oxidative stress-induced damage. Exhibits GTPase and E3 ubiquitin-protein ligase activities. Regulates dendritic spine density and synaptic neurotransmission; its ability to hydrolyze GTP is involved in the maintenance of dendritic spine density. In Mus musculus (Mouse), this protein is RING finger protein 112 (Rnf112).